The primary structure comprises 737 residues: MDPFFLNTQHVELLVSGKQSSPQDLLGIVSESLNQDRIVLFRPGAKTVFVELQGKIQQAESHHSGIFSLPVTKGISPQDYRVYHQNGLLAHDPYAFPLLWGEIDSFLFHEGTHQHIYDRMGAIPCEIGGVPGVRFVIWAPHAQRVSVVGDFNCWHGLVNPLHKVSDQGVWELFVPGLTAGSCYKWEIVTASGQVLIKSDPYGKFFGSPPQSVSVVVDDRYEWGDKEWLDERSKKAEGPMNIYEVHVGSWRWQEEQPLNYRELADQLSLYCKQMHYTHVELLPVTEHPLNESWGYQTTGYYAPTSRYGSFEDLQYFIDTMHQHGIGVILDWVPGHFPVDSFAMSNFDGTPLYEYTRNPSPLHPHWHTYTFDYAKPEVCNFLLGSALFWIDKMHIDGIRVDAVSSMLYLDYGRNPGEWIPNRYGGRENLDAVRFLQQFNTIIHEKYPGVLTFAEESTTFPKITVSVEEGGLGFDYKWNMGWMHDTLHYFEKDFPYRPYHQSDLTFPQWYAFSERFLLPFSHDEVVHGKRSLIGKMPGDAWRQFAQLRLLLGYQICQPGKKLLFMGGEFGQGREWSPNRELDWDLLDIHYHQGVHLCSQKLNSLYVNSPQLWKGDHLPQSFRWIDFSDTRNGVVAYLRFASDEDKEALLCVHHFGVNHFLHYILPMLPMKSCSLLMNTDDLAFGGSGKGFRNPKMLTPEMVRKEKTSSELAPLDDDGSVAWGLDIEMPPSATLIFSVTLQ.

The Nucleophile role is filled by Asp-399. Catalysis depends on Glu-452, which acts as the Proton donor.

It belongs to the glycosyl hydrolase 13 family. GlgB subfamily. As to quaternary structure, monomer.

The catalysed reaction is Transfers a segment of a (1-&gt;4)-alpha-D-glucan chain to a primary hydroxy group in a similar glucan chain.. Its pathway is glycan biosynthesis; glycogen biosynthesis. Functionally, catalyzes the formation of the alpha-1,6-glucosidic linkages in glycogen by scission of a 1,4-alpha-linked oligosaccharide from growing alpha-1,4-glucan chains and the subsequent attachment of the oligosaccharide to the alpha-1,6 position. The polypeptide is 1,4-alpha-glucan branching enzyme GlgB (Chlamydia muridarum (strain MoPn / Nigg)).